The following is a 170-amino-acid chain: 3-hydroxydecanoyl-[acyl-carrier-protein] dehydratase (170 aa).

Histidine 71 is an active-site residue.

It belongs to the thioester dehydratase family. FabA subfamily. In terms of assembly, homodimer.

The protein localises to the cytoplasm. It catalyses the reaction a (3R)-hydroxyacyl-[ACP] = a (2E)-enoyl-[ACP] + H2O. The catalysed reaction is (3R)-hydroxydecanoyl-[ACP] = (2E)-decenoyl-[ACP] + H2O. It carries out the reaction (2E)-decenoyl-[ACP] = (3Z)-decenoyl-[ACP]. The protein operates within lipid metabolism; fatty acid biosynthesis. Functionally, necessary for the introduction of cis unsaturation into fatty acids. Catalyzes the dehydration of (3R)-3-hydroxydecanoyl-ACP to E-(2)-decenoyl-ACP and then its isomerization to Z-(3)-decenoyl-ACP. Can catalyze the dehydratase reaction for beta-hydroxyacyl-ACPs with saturated chain lengths up to 16:0, being most active on intermediate chain length. This chain is 3-hydroxydecanoyl-[acyl-carrier-protein] dehydratase, found in Chelativorans sp. (strain BNC1).